A 536-amino-acid chain; its full sequence is Cytochrome c oxidase subunit 1 (536 aa).

A helical transmembrane segment spans residues 19 to 39 (IGMTYLGFGMLSAMMGTGMSV). Glutamate 44 is a Ca(2+) binding site. Histidine 67 is a binding site for Fe(II)-heme a. Transmembrane regions (helical) follow at residues 69–89 (LLMMFFFIMPVWMGAFGNFFL), 103–123 (LNNISFWCLPPALVCMVCSVL), 152–172 (AMFAMHLTSMSSLLGAMNFMV), 188–208 (PLFAWAMFLTAMLLLLSLPVL), 240–260 (LFWFFGHPEVYILMMPGFGVM), and 273–293 (FGEMGMLYAMGSIGFLGFLVW). Histidine 246 lines the Cu cation pocket. The segment at residues 246–250 (HPEVY) is a cross-link (1'-histidyl-3'-tyrosine (His-Tyr)). Tyrosine 250 serves as a coordination point for O2. Residues histidine 295 and histidine 296 each coordinate Cu cation. Transmembrane regions (helical) follow at residues 315-335 (MVIAVPTGIKIFSWLATIYGG) and 341-361 (VPMLFALGFLFLFTMGGLTGV). Mg(2+) contacts are provided by histidine 373 and aspartate 374. Position 381 (histidine 381) interacts with heme a3. Residue histidine 383 coordinates Fe(II)-heme a. Transmembrane regions (helical) follow at residues 388–408 (MGALFSLMGAYYYWGPAMFGL) and 418–438 (HFWLLFMSVNVMFLPMHFLGL). A Ca(2+)-binding site is contributed by proline 446. The chain crosses the membrane as a helical span at residues 461 to 481 (MGSAMSVMSVLVGLKSVLVQL).

Belongs to the heme-copper respiratory oxidase family. In terms of assembly, component of the cytochrome c oxidase (complex IV, CIV), a multisubunit enzyme composed of a catalytic core of 3 subunits and several supernumerary subunits. The complex exists as a monomer or a dimer and forms supercomplexes (SCs) in the inner mitochondrial membrane with ubiquinol-cytochrome c oxidoreductase (cytochrome b-c1 complex, complex III, CIII). Requires heme as cofactor. The cofactor is Cu cation.

The protein localises to the mitochondrion inner membrane. The catalysed reaction is 4 Fe(II)-[cytochrome c] + O2 + 8 H(+)(in) = 4 Fe(III)-[cytochrome c] + 2 H2O + 4 H(+)(out). The protein operates within energy metabolism; oxidative phosphorylation. In terms of biological role, component of the cytochrome c oxidase, the last enzyme in the mitochondrial electron transport chain which drives oxidative phosphorylation. The respiratory chain contains 3 multisubunit complexes succinate dehydrogenase (complex II, CII), ubiquinol-cytochrome c oxidoreductase (cytochrome b-c1 complex, complex III, CIII) and cytochrome c oxidase (complex IV, CIV), that cooperate to transfer electrons derived from NADH and succinate to molecular oxygen, creating an electrochemical gradient over the inner membrane that drives transmembrane transport and the ATP synthase. Cytochrome c oxidase is the component of the respiratory chain that catalyzes the reduction of oxygen to water. Electrons originating from reduced cytochrome c in the intermembrane space (IMS) are transferred via the dinuclear copper A center (CU(A)) of subunit 2 and heme A of subunit 1 to the active site in subunit 1, a binuclear center (BNC) formed by heme A3 and copper B (CU(B)). The BNC reduces molecular oxygen to 2 water molecules using 4 electrons from cytochrome c in the IMS and 4 protons from the mitochondrial matrix. In Debaryomyces hansenii (strain ATCC 36239 / CBS 767 / BCRC 21394 / JCM 1990 / NBRC 0083 / IGC 2968) (Yeast), this protein is Cytochrome c oxidase subunit 1 (COX1).